The chain runs to 339 residues: Heat-inducible transcription repressor HrcA (339 aa).

This sequence belongs to the HrcA family.

Negative regulator of class I heat shock genes (grpE-dnaK-dnaJ and groELS operons). Prevents heat-shock induction of these operons. The protein is Heat-inducible transcription repressor HrcA of Acidothermus cellulolyticus (strain ATCC 43068 / DSM 8971 / 11B).